The primary structure comprises 91 residues: DNA-directed RNA polymerase subunit omega (91 aa).

This sequence belongs to the RNA polymerase subunit omega family. The RNAP catalytic core consists of 2 alpha, 1 beta, 1 beta' and 1 omega subunit. When a sigma factor is associated with the core the holoenzyme is formed, which can initiate transcription.

It carries out the reaction RNA(n) + a ribonucleoside 5'-triphosphate = RNA(n+1) + diphosphate. In terms of biological role, promotes RNA polymerase assembly. Latches the N- and C-terminal regions of the beta' subunit thereby facilitating its interaction with the beta and alpha subunits. The sequence is that of DNA-directed RNA polymerase subunit omega from Syntrophus aciditrophicus (strain SB).